A 344-amino-acid polypeptide reads, in one-letter code: 3,4-dihydroxy-2-butanone 4-phosphate synthase (344 aa).

The segment at 1-202 is DHBP synthase; that stretch reads MILKRVTEAL…VSDLISYRLE (202 aa). Residues 27 to 28, Asp-32, 139 to 143, and Glu-163 each bind D-ribulose 5-phosphate; these read RE and RTGHT. Residue Glu-28 participates in Mg(2+) binding. His-142 is a Mg(2+) binding site. Residues 203–344 are GTP cyclohydrolase II-like; it reads NESLLKMFCQ…GLKLVETISL (142 aa).

It in the N-terminal section; belongs to the DHBP synthase family. In the C-terminal section; belongs to the GTP cyclohydrolase II family. Mg(2+) serves as cofactor. Mn(2+) is required as a cofactor.

It carries out the reaction D-ribulose 5-phosphate = (2S)-2-hydroxy-3-oxobutyl phosphate + formate + H(+). The protein operates within cofactor biosynthesis; riboflavin biosynthesis; 2-hydroxy-3-oxobutyl phosphate from D-ribulose 5-phosphate: step 1/1. Functionally, catalyzes the conversion of D-ribulose 5-phosphate to formate and 3,4-dihydroxy-2-butanone 4-phosphate. The sequence is that of 3,4-dihydroxy-2-butanone 4-phosphate synthase (ribB) from Helicobacter pylori (strain ATCC 700392 / 26695) (Campylobacter pylori).